We begin with the raw amino-acid sequence, 263 residues long: HTH-type transcriptional repressor NanR (263 aa).

Residues 1–25 are disordered; the sequence is MDVMNAFDSQAEDSPTSLGRSLRRR. The region spanning 30–98 is the HTH gntR-type domain; sequence KKLSEMVEEE…NGERARVSRP (69 aa). A DNA-binding region (H-T-H motif) is located at residues 58–77; it reads ERELMAFFNVGRPSVREALA.

The protein belongs to the NanR family.

Its function is as follows. Transcriptional repressor that controls expression of the genes required for the catabolism of sialic acids. In Salmonella schwarzengrund (strain CVM19633), this protein is HTH-type transcriptional repressor NanR.